The chain runs to 118 residues: Non-specific lipid-transfer protein 1 (118 aa).

The first 20 residues, 1-20 (MARLAVAIAVVAAVVVVLAA), serve as a signal peptide directing secretion. Intrachain disulfides connect Cys29–Cys77, Cys39–Cys54, Cys55–Cys100, and Cys75–Cys114.

Belongs to the plant LTP family.

Plant non-specific lipid-transfer proteins transfer phospholipids as well as galactolipids across membranes. May play a role in wax or cutin deposition in the cell walls of expanding epidermal cells and certain secretory tissues. The polypeptide is Non-specific lipid-transfer protein 1 (LTP1) (Sorghum bicolor (Sorghum)).